The sequence spans 237 residues: Carbohydrate deacetylase (237 aa).

Residues His-59 and His-125 each contribute to the Mg(2+) site.

The protein belongs to the YdjC deacetylase family. Mg(2+) serves as cofactor.

In terms of biological role, probably catalyzes the deacetylation of acetylated carbohydrates an important step in the degradation of oligosaccharides. In Halalkalibacterium halodurans (strain ATCC BAA-125 / DSM 18197 / FERM 7344 / JCM 9153 / C-125) (Bacillus halodurans), this protein is Carbohydrate deacetylase.